The sequence spans 420 residues: D-tagatose-1,6-bisphosphate aldolase subunit GatZ (420 aa).

This sequence belongs to the GatZ/KbaZ family. GatZ subfamily. Forms a complex with GatY.

It functions in the pathway carbohydrate metabolism; D-tagatose 6-phosphate degradation; D-glyceraldehyde 3-phosphate and glycerone phosphate from D-tagatose 6-phosphate: step 2/2. Functionally, component of the tagatose-1,6-bisphosphate aldolase GatYZ that is required for full activity and stability of the Y subunit. Could have a chaperone-like function for the proper and stable folding of GatY. When expressed alone, GatZ does not show any aldolase activity. Is involved in the catabolism of galactitol. The protein is D-tagatose-1,6-bisphosphate aldolase subunit GatZ of Escherichia coli O17:K52:H18 (strain UMN026 / ExPEC).